Here is a 168-residue protein sequence, read N- to C-terminus: Cell division inhibitor SulA (168 aa).

The interval 106–112 (ALLTGNY) is ftsZ binding. Residues 161–168 (KIHSYLYH) form a lon protease binding region.

Belongs to the SulA family. Interacts with FtsZ. Is rapidly cleaved and degraded by the Lon protease once DNA damage is repaired.

Functionally, component of the SOS system and an inhibitor of cell division. Accumulation of SulA causes rapid cessation of cell division and the appearance of long, non-septate filaments. In the presence of GTP, binds a polymerization-competent form of FtsZ in a 1:1 ratio, thus inhibiting FtsZ polymerization and therefore preventing it from participating in the assembly of the Z ring. This mechanism prevents the premature segregation of damaged DNA to daughter cells during cell division. This chain is Cell division inhibitor SulA, found in Yersinia pseudotuberculosis serotype O:1b (strain IP 31758).